A 573-amino-acid chain; its full sequence is Sulfite reductase [NADPH] hemoprotein beta-component (573 aa).

Residues C436, C442, C481, and C485 each coordinate [4Fe-4S] cluster. A siroheme-binding site is contributed by C485.

This sequence belongs to the nitrite and sulfite reductase 4Fe-4S domain family. Alpha(8)-beta(8). The alpha component is a flavoprotein, the beta component is a hemoprotein. It depends on siroheme as a cofactor. The cofactor is [4Fe-4S] cluster.

The catalysed reaction is hydrogen sulfide + 3 NADP(+) + 3 H2O = sulfite + 3 NADPH + 4 H(+). It participates in sulfur metabolism; hydrogen sulfide biosynthesis; hydrogen sulfide from sulfite (NADPH route): step 1/1. In terms of biological role, component of the sulfite reductase complex that catalyzes the 6-electron reduction of sulfite to sulfide. This is one of several activities required for the biosynthesis of L-cysteine from sulfate. The chain is Sulfite reductase [NADPH] hemoprotein beta-component from Alteromonas mediterranea (strain DSM 17117 / CIP 110805 / LMG 28347 / Deep ecotype).